Here is a 350-residue protein sequence, read N- to C-terminus: MSSSDNDEPKVVEISDDEMECEGVVEVNNEQSDEAKMREFAEITATDEIMAQSILQDVGWDLKRALDVFFGSDAFKETRNEAVMGPSSSAVGNQPVMTAEDLKGFELSLMSWNIDGLDGRSLATRMKAVATIVKKVNPDILFLQEVVDRDLEPIDKLQSLYKIYYSNKGCQYYTAILVSKMFEVEKHDVVHFQNSGMYRTLQIVEGSIGGMKVFLVNTHLESMRDHRAQRMAQFSFCMDRCAEIIANNPGCFLFFGGDLNLRDEEISSIPDGVLDAWVSAGCDTKTKWTWDTYKNDNKQGFNGAKMRFDRIYWHGPFNQVHFSLEGRQRIRSCLCFPSDHWAINATFSAV.

Residues 113 to 117 form an interaction with 5' end of substrate DNA region; sequence NIDGL. Mg(2+) is bound by residues Asp115 and Glu145. Residues 219-224 form an interaction with 5' end of substrate DNA region; it reads HLESMR. Catalysis depends on Asp258, which acts as the Proton donor/acceptor. Residues 260-262 form an interaction with 5' end of substrate DNA region; it reads NLR.

The protein belongs to the CCR4/nocturin family. TTRAP/TDP2 subfamily. The cofactor is Mg(2+). Requires Mn(2+) as cofactor.

The protein localises to the nucleus. It is found in the PML body. DNA repair enzyme that can remove a variety of covalent adducts from DNA through hydrolysis of a 5'-phosphodiester bond, giving rise to DNA with a free 5' phosphate. Catalyzes the hydrolysis of dead-end complexes between DNA and the topoisomerase 2 (top2) active site tyrosine residue. Hydrolyzes 5'-phosphoglycolates on protruding 5' ends on DNA double-strand breaks (DSBs) due to DNA damage by radiation and free radicals. This is 5'-tyrosyl-DNA phosphodiesterase from Caenorhabditis briggsae.